A 403-amino-acid polypeptide reads, in one-letter code: PP2A regulatory subunit TAP46 (403 aa).

Disordered regions lie at residues 158-184 (ERRG…LDDD) and 351-403 (ANSS…TPCG). 2 stretches are compositionally biased toward acidic residues: residues 174 to 184 (ETEEDDVLDDD) and 366 to 375 (EDDEEDDDDA). A compositionally biased stretch (basic and acidic residues) spans 376-391 (AQDKARAWDDWKDDNP).

Belongs to the IGBP1/TAP42 family.

Functionally, involved in the regulation of the TOR signaling pathway. Seems to act as a regulator of PP2A catalytic activity. This Nicotiana tabacum (Common tobacco) protein is PP2A regulatory subunit TAP46.